A 265-amino-acid polypeptide reads, in one-letter code: Small ribosomal subunit protein uS2 (265 aa).

The disordered stretch occupies residues 231–265 (VEEEYEDYEGSEEDYDYDETEYADSVIPEDGEEAE).

The protein belongs to the universal ribosomal protein uS2 family.

The polypeptide is Small ribosomal subunit protein uS2 (Nostoc sp. (strain PCC 7120 / SAG 25.82 / UTEX 2576)).